We begin with the raw amino-acid sequence, 208 residues long: Probable GTP-binding protein EngB (208 aa).

In terms of domain architecture, EngB-type G spans 23–205 (LTSEMVVLGR…RQTLLKYLLT (183 aa)). GTP contacts are provided by residues 31 to 38 (GRSNVGKS), 57 to 61 (GKTRL), 84 to 87 (DLPG), 154 to 157 (TKFD), and 182 to 184 (FNA). Mg(2+) is bound by residues Ser38 and Thr59.

Belongs to the TRAFAC class TrmE-Era-EngA-EngB-Septin-like GTPase superfamily. EngB GTPase family. Mg(2+) is required as a cofactor.

Functionally, necessary for normal cell division and for the maintenance of normal septation. The polypeptide is Probable GTP-binding protein EngB (Helicobacter acinonychis (strain Sheeba)).